The following is a 313-amino-acid chain: Ribosomal RNA small subunit methyltransferase H (313 aa).

S-adenosyl-L-methionine-binding positions include glycine 35 to histidine 37, aspartate 55, phenylalanine 79, aspartate 101, and glutamine 108.

This sequence belongs to the methyltransferase superfamily. RsmH family.

Its subcellular location is the cytoplasm. The catalysed reaction is cytidine(1402) in 16S rRNA + S-adenosyl-L-methionine = N(4)-methylcytidine(1402) in 16S rRNA + S-adenosyl-L-homocysteine + H(+). Specifically methylates the N4 position of cytidine in position 1402 (C1402) of 16S rRNA. This chain is Ribosomal RNA small subunit methyltransferase H, found in Shigella dysenteriae serotype 1 (strain Sd197).